Consider the following 581-residue polypeptide: Kelch-like protein 38 (581 aa).

The BTB domain maps to T34–A101. In terms of domain architecture, BACK spans C136–A237. Kelch repeat units follow at residues F285–R332, V334–N383, F384–Q431, L433–E479, Q480–N521, and L523–C573.

The chain is Kelch-like protein 38 (Klhl38) from Mus musculus (Mouse).